The primary structure comprises 122 residues: Large ribosomal subunit protein bL19 (122 aa).

It belongs to the bacterial ribosomal protein bL19 family.

This protein is located at the 30S-50S ribosomal subunit interface and may play a role in the structure and function of the aminoacyl-tRNA binding site. The chain is Large ribosomal subunit protein bL19 from Chlamydia felis (strain Fe/C-56) (Chlamydophila felis).